Consider the following 299-residue polypeptide: GTPase Era (299 aa).

The region spanning K5–E172 is the Era-type G domain. Positions G13 to S20 are G1. G13–S20 contacts GTP. The G2 stretch occupies residues Q39–N43. Residues D60–G63 form a G3 region. Residues D60 to I64 and N122 to D125 each bind GTP. The segment at N122–D125 is G4. The segment at I151–A153 is G5. One can recognise a KH type-2 domain in the interval T203 to R280.

Belongs to the TRAFAC class TrmE-Era-EngA-EngB-Septin-like GTPase superfamily. Era GTPase family. Monomer.

Its subcellular location is the cytoplasm. The protein resides in the cell membrane. Its function is as follows. An essential GTPase that binds both GDP and GTP, with rapid nucleotide exchange. Plays a role in 16S rRNA processing and 30S ribosomal subunit biogenesis and possibly also in cell cycle regulation and energy metabolism. This is GTPase Era from Staphylococcus aureus (strain NCTC 8325 / PS 47).